A 261-amino-acid polypeptide reads, in one-letter code: Short-chain dehydrogenase/reductase AFUA_1G00990 (261 aa).

Leu-19, Asp-67, Asn-94, Tyr-169, Lys-173, and Thr-213 together coordinate NADP(+). The active-site Proton donor is Tyr-169. Lys-173 acts as the Lowers pKa of active site Tyr in catalysis.

The protein belongs to the short-chain dehydrogenases/reductases (SDR) family.

Its function is as follows. Short-chain dehydrogenase/reductase; part of the gene cluster that mediates the biosynthesis of fumigermin that inhibits germination of spores of the inducing S.rapamycinicus, and thus helps the fungus to defend resources in the shared habitat against a bacterial competitor. The partially reducing polyketide synthase fngA alone is sufficient for the production of fumigermin. FgnA catalyzes the condensation of 3 malonyl-CoA units to an acetyl-CoA starter, and 3 methylations to yield fumigermin. It is remarkable that the five cluster genes including fgnA are conserved in distantly related fungi, supporting the assumption of a fumigermin cluster; it is thus possible that originally all five genes were functional, but that the genes encoding tailoring enzymes became inactive from mutations, similar to the case of the fgnA gene in strains A1163 and Af293. This Aspergillus fumigatus (strain ATCC MYA-4609 / CBS 101355 / FGSC A1100 / Af293) (Neosartorya fumigata) protein is Short-chain dehydrogenase/reductase AFUA_1G00990.